A 442-amino-acid polypeptide reads, in one-letter code: Coiled-coil domain-containing protein 91 (442 aa).

Residues 1-16 (MDDDDFGGFEAAETFD) are GGA1-binding motif. A disordered region spans residues 1–27 (MDDDDFGGFEAAETFDGEQGGNQAVSP). Residues Ser43 and Ser46 each carry the phosphoserine modification. A disordered region spans residues 48 to 79 (ELILDHDRSSPSSGHLRSDAVISSPDDTRADS). Coiled coils occupy residues 127–213 (GVHV…ALSI) and 248–409 (CEEL…RLDQ). A homodimerization region spans residues 211 to 414 (LSIIVDEYKA…RRLDQVTRQR (204 aa)).

In terms of assembly, homodimer. Interacts with GGA1, GGA2 and AP1G1.

The protein resides in the membrane. Its subcellular location is the golgi apparatus. It is found in the trans-Golgi network membrane. The protein localises to the trans-Golgi network. In terms of biological role, involved in the regulation of membrane traffic through the trans-Golgi network (TGN). Functions in close cooperation with the GGAs in the sorting of hydrolases to lysosomes. The sequence is that of Coiled-coil domain-containing protein 91 (Ccdc91) from Rattus norvegicus (Rat).